We begin with the raw amino-acid sequence, 1358 residues long: MSHSSHYSPVDSGMVPSSSSTEDHLSPTLSASIVLPAQLNPFAKAYDIPPSSIVQLGWALLLRCHLAIPSPCWSTIDDKTMPRGSDTHALQWESLHLEEGRSISWILQRWEDPSVHWYLSSDQLPGSKSPTLTTMLFLVKEYGLFDPVTPIDPGMGTIIYFYPSDEQPRLHISWNPDVVSSGHAFHLTRSLEHALQTIFLAPSVDIRDVNLFGIWDHQQLLQWNSYCPDPVDRLVQEMFQDVVAATPEASAVAAWDGELNYRELDRLSSRLAGVLQSDFGVVSETIVALCFEKSVWAIVAMLAVVKAGGAFLHIDPQHPPARHQAMIKSTASKLFLCSEQTRDTVVRSVPDCPSLVIHREMFAAQPDHAQQDTVISSGNLGPTNAAYVVCTSGSTGTPKAIVVEHVSLCSSVTAQAKAMDITAGSRVLQYAAYTFDVSIGDIFAALTHGACICIPSNWERAHDLSGAINRLGVNQACLTSTVASLLTPVEVPKLKKLTLGGEPATQQCINMWVDKVALKNIYGPAECTVWCIIQPDVSSGIAVSNIGHAIGARAWIVHPENHDRLMPIGAVGELLIEGPLVARGYLNDPVRTNAVFLAQPPIWLASFGPPPPRSRFYKTGDLARYGPGGALLFEGRKDTQVKLRGQRIELGEVEYRLHQALSDLSPSAAVELVHPKESTAPLLCAFITWDEGIDLDLQPAKPPLSACLTPNARKRFNHTVSLLQTEMERTLPAYMIPGLCIPVHKLPLTTSGKLDRKALRYFCTQHSLAFLSTFENNNVNSPTDGATDSFAAPLETVSPAESTLAQLWAQVLGRKTDSIGRKDNFLSLGGDSLAAMRLVNRAARDAQLTLTVADVFKCPVLADQASLVRPLVQTRNLVPFELMAPGDLQIEDLVAYVAEKCGVLHDQVEDIYPCTPLQDEMMRDSLSGDRTQMGQEVILLAEDLDIPRYLSACARVFQRFPILRTRFVQHSDRLIQVVIRENLGWQRPESLTEYVEADAKEAPALNKPLTRWALTSDSTHCILTMHHSIFDGISLGHILGAIYAVYQSIPLPPDSVSFAAFLAQINEHTSGLSDDSKQFWRSYLRPSPGSGDLPLPIVDSTYRPCANRGTQRLVTFQSGVVPALQQHGLTEATLIRGAWACTLAQLQTSSSTPSDVVFGTILTGRNLHLPGVDALVAPTLTHAPIRIRMSAASNEKPASFLARVQADATAMIPFEHDGMDRIRAIDAQVRAVCDQMQTLLVIQPIPEGLTSASTSPFPGPILSGPRVEAREMRHFHWYGLLVECTLLPTNGFFVRMCYDDKLFSSEDVERLLDDYSQALHELGGGLTEGEEVHLPTERKLDTLTLPGLVAPSGAEDMV.

A disordered region spans residues 1–23; sequence MSHSSHYSPVDSGMVPSSSSTED. The interval 261–659 is adenylation; sequence YRELDRLSSR…LGEVEYRLHQ (399 aa). The Carrier domain maps to 795-872; sequence ETVSPAESTL…DQASLVRPLV (78 aa). Ser832 carries the O-(pantetheine 4'-phosphoryl)serine modification. Residues 909–1322 are condensation; that stretch reads EDIYPCTPLQ…DDYSQALHEL (414 aa).

It belongs to the NRP synthetase family. It depends on pantetheine 4'-phosphate as a cofactor.

The catalysed reaction is restrictinol + glycine + H(+) = restricticin + H2O. Its pathway is antifungal biosynthesis. Functionally, nonribosomal peptide synthetase; part of the gene cluster that mediates the biosynthesis of the tetrahydropyranyl antifungal agent restricticin that acts as an inhibitor of CYP51 and blocks the ergosterol biosynthesis. Within the pathway, rstn8 catalyzes the C3 esterification of restrictinol with glycine to yield restricticin. Rstn8 represents an example of the emerging class of single-module NRPS-like enzymes that perform esterification reactions. Rstn8 displays strict substrate specificity toward glycine as no other natural amino acid is accepted. Rstn8 does not recognize desmethylrestrictinol as a substrate, demonstrating that rstn1-catalyzed methylation, possibly protecting the C4-OH, must precede the final esterification step. The highly reducing polyketide synthase rstn3, the short chain dehydrogenase rstn4, the cyclase rstn5, the FAD-dependent monooxygenase rstn6 and the enoylreductase rstn7 are required to generate the first stable intermediate desmethylrestrictinol. Rstn3 with rstn7 biosynthesize the first polyketide chain intermediate that is reduced by rstn4, followed by epoxidation by rstn6 before 6-endo cyclization via epoxide opening by rstn5 leads to desmethylrestrictinol. The methyltransferase rstn1 then catalyzes the C4 O-methylation of desmethylrestrictinol to produce restrictinol, and the nonribosomal peptide synthetase rstn8 catalyzes the C3 esterification of restrictinol with glycine that leads to restricticin. The chain is Nonribosomal peptide synthetase rstn8 from Aspergillus nomiae NRRL (strain ATCC 15546 / NRRL 13137 / CBS 260.88 / M93).